A 209-amino-acid polypeptide reads, in one-letter code: Mitochondrial import inner membrane translocase subunit Tim23 (209 aa).

A run of 3 helical transmembrane segments spans residues 73–93 (FELA…FGAM), 125–145 (ALWA…GVII), and 181–197 (GLTG…YNNW).

This sequence belongs to the Tim17/Tim22/Tim23 family. As to quaternary structure, component of the TIM23 complex at least composed of TIMM23, TIMM17 (TIMM17A or TIMM17B) and TIMM50; within this complex, directly interacts with TIMM50. The complex interacts with the TIMM44 component of the PAM complex and with DNAJC15. Upon mitochondrial depolarization, interacts with PINK1; the interaction is required for PINK1 accumulation at the outer mitochondrial membrane, kinase activation by autophosphorylation and PRKN recruitement to mitochondria.

The protein resides in the mitochondrion inner membrane. In terms of biological role, essential component of the TIM23 complex, a complex that mediates the translocation of transit peptide-containing proteins across the mitochondrial inner membrane. Has a role in the activation of stress-induced mitophagy by protecting PINK1 from OMA1-mediated degradation and facilitating its accumulation at the outer mitochondrial membrane in response to depolarization. This is Mitochondrial import inner membrane translocase subunit Tim23 (TIMM23) from Homo sapiens (Human).